Here is a 59-residue protein sequence, read N- to C-terminus: Photosystem II reaction center protein K (59 aa).

A propeptide spanning residues 1–22 (MLNIFSLICLSSALHSSSFFFA) is cleaved from the precursor. A helical transmembrane segment spans residues 38-58 (MPVIPVLFFLLALVWQAAVSF).

The protein belongs to the PsbK family. As to quaternary structure, PSII is composed of 1 copy each of membrane proteins PsbA, PsbB, PsbC, PsbD, PsbE, PsbF, PsbH, PsbI, PsbJ, PsbK, PsbL, PsbM, PsbT, PsbX, PsbY, PsbZ, Psb30/Ycf12, at least 3 peripheral proteins of the oxygen-evolving complex and a large number of cofactors. It forms dimeric complexes.

It is found in the plastid. The protein localises to the chloroplast thylakoid membrane. One of the components of the core complex of photosystem II (PSII). PSII is a light-driven water:plastoquinone oxidoreductase that uses light energy to abstract electrons from H(2)O, generating O(2) and a proton gradient subsequently used for ATP formation. It consists of a core antenna complex that captures photons, and an electron transfer chain that converts photonic excitation into a charge separation. This is Photosystem II reaction center protein K from Piper cenocladum (Ant piper).